The primary structure comprises 234 residues: Large ribosomal subunit protein uL1c (234 aa).

It belongs to the universal ribosomal protein uL1 family. Part of the 50S ribosomal subunit.

The protein localises to the plastid. Its subcellular location is the chloroplast. Functionally, binds directly to 23S rRNA. Might be involved in E site tRNA release (Potential). This Guillardia theta (Cryptophyte) protein is Large ribosomal subunit protein uL1c (rpl1).